Reading from the N-terminus, the 345-residue chain is Glycerol-3-phosphate dehydrogenase [NAD(P)+] (345 aa).

NADPH is bound by residues Ser23, Tyr24, His44, and Lys118. Lys118, Gly147, and Thr149 together coordinate sn-glycerol 3-phosphate. Residue Ala151 coordinates NADPH. Sn-glycerol 3-phosphate contacts are provided by Lys203, Asp256, Ser266, Arg267, and Asn268. The active-site Proton acceptor is the Lys203. Arg267 serves as a coordination point for NADPH. NADPH contacts are provided by Val291 and Glu293.

The protein belongs to the NAD-dependent glycerol-3-phosphate dehydrogenase family.

It localises to the cytoplasm. It carries out the reaction sn-glycerol 3-phosphate + NAD(+) = dihydroxyacetone phosphate + NADH + H(+). The enzyme catalyses sn-glycerol 3-phosphate + NADP(+) = dihydroxyacetone phosphate + NADPH + H(+). The protein operates within membrane lipid metabolism; glycerophospholipid metabolism. In terms of biological role, catalyzes the reduction of the glycolytic intermediate dihydroxyacetone phosphate (DHAP) to sn-glycerol 3-phosphate (G3P), the key precursor for phospholipid synthesis. This chain is Glycerol-3-phosphate dehydrogenase [NAD(P)+], found in Vibrio vulnificus (strain CMCP6).